The chain runs to 298 residues: Nucleotide-binding protein Dred_3054 (298 aa).

20–27 (GMSGAGKT) lines the ATP pocket. 71–74 (DIRG) contacts GTP.

It belongs to the RapZ-like family.

Displays ATPase and GTPase activities. The polypeptide is Nucleotide-binding protein Dred_3054 (Desulforamulus reducens (strain ATCC BAA-1160 / DSM 100696 / MI-1) (Desulfotomaculum reducens)).